A 130-amino-acid chain; its full sequence is Iron-sulfur cluster insertion protein ErpA (130 aa).

Iron-sulfur cluster is bound by residues C58, C122, and C124.

This sequence belongs to the HesB/IscA family. In terms of assembly, homodimer. The cofactor is iron-sulfur cluster.

Functionally, required for insertion of 4Fe-4S clusters for at least IspG. This Stenotrophomonas maltophilia (strain R551-3) protein is Iron-sulfur cluster insertion protein ErpA.